The sequence spans 349 residues: Phosphoribosylformylglycinamidine cyclo-ligase (349 aa).

Belongs to the AIR synthase family.

Its subcellular location is the cytoplasm. The catalysed reaction is 2-formamido-N(1)-(5-O-phospho-beta-D-ribosyl)acetamidine + ATP = 5-amino-1-(5-phospho-beta-D-ribosyl)imidazole + ADP + phosphate + H(+). Its pathway is purine metabolism; IMP biosynthesis via de novo pathway; 5-amino-1-(5-phospho-D-ribosyl)imidazole from N(2)-formyl-N(1)-(5-phospho-D-ribosyl)glycinamide: step 2/2. This is Phosphoribosylformylglycinamidine cyclo-ligase from Psychrobacter cryohalolentis (strain ATCC BAA-1226 / DSM 17306 / VKM B-2378 / K5).